The primary structure comprises 445 residues: Proline--tRNA ligase (445 aa).

This sequence belongs to the class-II aminoacyl-tRNA synthetase family. ProS type 2 subfamily. In terms of assembly, homodimer.

It localises to the cytoplasm. It catalyses the reaction tRNA(Pro) + L-proline + ATP = L-prolyl-tRNA(Pro) + AMP + diphosphate. Its function is as follows. Catalyzes the attachment of proline to tRNA(Pro) in a two-step reaction: proline is first activated by ATP to form Pro-AMP and then transferred to the acceptor end of tRNA(Pro). This Caulobacter sp. (strain K31) protein is Proline--tRNA ligase.